The following is a 42-amino-acid chain: Photosystem I reaction center subunit IX (42 aa).

Residues 7–27 form a helical membrane-spanning segment; sequence YLSTAPVLAAIWFAILAGLLI.

Belongs to the PsaJ family.

The protein resides in the plastid. Its subcellular location is the chloroplast thylakoid membrane. May help in the organization of the PsaE and PsaF subunits. The chain is Photosystem I reaction center subunit IX from Zygnema circumcarinatum (Green alga).